A 437-amino-acid chain; its full sequence is 3-phosphoshikimate 1-carboxyvinyltransferase (437 aa).

3-phosphoshikimate-binding residues include K22, S23, and R27. Position 22 (K22) interacts with phosphoenolpyruvate. Positions 94 and 122 each coordinate phosphoenolpyruvate. Residues S167, Q169, D314, and K341 each contribute to the 3-phosphoshikimate site. Q169 serves as a coordination point for phosphoenolpyruvate. D314 serves as the catalytic Proton acceptor. Phosphoenolpyruvate contacts are provided by R345 and R389.

Belongs to the EPSP synthase family. As to quaternary structure, monomer.

The protein localises to the cytoplasm. It catalyses the reaction 3-phosphoshikimate + phosphoenolpyruvate = 5-O-(1-carboxyvinyl)-3-phosphoshikimate + phosphate. It functions in the pathway metabolic intermediate biosynthesis; chorismate biosynthesis; chorismate from D-erythrose 4-phosphate and phosphoenolpyruvate: step 6/7. Catalyzes the transfer of the enolpyruvyl moiety of phosphoenolpyruvate (PEP) to the 5-hydroxyl of shikimate-3-phosphate (S3P) to produce enolpyruvyl shikimate-3-phosphate and inorganic phosphate. The chain is 3-phosphoshikimate 1-carboxyvinyltransferase from Oenococcus oeni (strain ATCC BAA-331 / PSU-1).